The primary structure comprises 64 residues: Long neurotoxin MS4 (64 aa).

Disulfide bonds link C3–C24, C6–C11, C17–C41, C45–C57, and C58–C63.

The protein belongs to the three-finger toxin family. Ancestral subfamily. In terms of tissue distribution, expressed by the venom gland.

Its subcellular location is the secreted. Its function is as follows. Produces peripheral paralysis by blocking neuromuscular transmission at the postsynaptic site. Weak inhibitor of the endogenous nicotinic acetylcholine receptors (nAChR) in the human rhabdomyosarcoma TE 671 cell line with an IC(50) of 690 mM. This neurotoxin is lethal to zebrafish by injection at the back of the dorsolateral region, but is not toxic to mice by intraperitoneal injection. This is Long neurotoxin MS4 from Micrurus surinamensis (Surinam coral snake).